Reading from the N-terminus, the 555-residue chain is uncharacterized protein (555 aa).

The next 5 membrane-spanning stretches (helical) occupy residues 13 to 30, 35 to 57, 72 to 91, 98 to 120, and 157 to 179; these read ALQA…GLGL, FWGV…HFGL, LVIF…FSSF, LNML…SYAT, and TPAL…AVLL. 2 consecutive RCK C-terminal domains span residues 188-273 and 282-366; these read EDLE…LFGE and KEDI…VLGN. 6 consecutive transmembrane segments (helical) span residues 376–398, 408–430, 437–459, 469–491, 498–517, and 532–554; these read LVVI…SIPG, AGGP…MITY, LMLR…GAHF, LLWI…FVAF, FGSV…ALNY, and ATVY…MFLL.

It belongs to the AAE transporter (TC 2.A.81) family.

It is found in the cell membrane. This is an uncharacterized protein from Bacteroides thetaiotaomicron (strain ATCC 29148 / DSM 2079 / JCM 5827 / CCUG 10774 / NCTC 10582 / VPI-5482 / E50).